The sequence spans 238 residues: MIYAGILAGGIGSRMGNVPLPKQFLDLDGKPILVHTVEKFLLTSEFDKIFIATPQKWISHTKDTLRKHHITDDRIEVVQGGSDRNETIMNIISAAEKENGISDDDVIITHDAVRPFLTRRIIKENIESVLKYGAVDTVITATDTIITSADGDSIQSIPVRSEMYQGQTPQSFNVNLLRNSYNDLSDEDKQIMTDACKILVVAGKQVKLVMGELYNIKITTPYDLKVANSIIKGGMLSD.

Residues 7 to 10 (LAGG) and 81 to 87 (GSDRNET) contribute to the CTP site.

Belongs to the IspD/TarI cytidylyltransferase family. TarI subfamily.

The enzyme catalyses D-ribitol 5-phosphate + CTP + H(+) = CDP-L-ribitol + diphosphate. The protein operates within cell wall biogenesis; poly(ribitol phosphate) teichoic acid biosynthesis. In terms of biological role, catalyzes the transfer of the cytidylyl group of CTP to D-ribitol 5-phosphate. The chain is Ribitol-5-phosphate cytidylyltransferase from Staphylococcus saprophyticus subsp. saprophyticus (strain ATCC 15305 / DSM 20229 / NCIMB 8711 / NCTC 7292 / S-41).